The primary structure comprises 705 residues: Dolichyl-diphosphooligosaccharide--protein glycosyltransferase subunit STT3A (705 aa).

The Cytoplasmic segment spans residues 1–17; the sequence is MTKLGFLRLSYEKQDTL. Residues 18-38 form a helical membrane-spanning segment; the sequence is LKLLILSMAAVLSFSTRLFAV. At 39-119 the chain is on the lumenal side; that stretch reads LRFESVIHEF…IDIRNVCVFL (81 aa). Residues 47 to 49 carry the DXD motif 1 motif; it reads EFD. Asp49 is a Mn(2+) binding site. A helical membrane pass occupies residues 120 to 138; it reads APLFSSFTTIVTYHLTKEL. Topologically, residues 139-140 are cytoplasmic; sequence KD. The helical transmembrane segment at 141 to 158 threads the bilayer; it reads AGAGLLAAAMIAVVPGYI. The Lumenal segment spans residues 159-169; it reads SRSVAGSYDNE. Mn(2+) contacts are provided by Asp167 and Glu169. The DXD motif 2 signature appears at 167–169; it reads DNE. The helical transmembrane segment at 170–189 threads the bilayer; that stretch reads GIAIFCMLLTYYMWIKAVKT. Topologically, residues 190-191 are cytoplasmic; sequence GS. The chain crosses the membrane as a helical span at residues 192 to 206; that stretch reads IYWAAKCALAYFYMV. Residues 207 to 211 are Lumenal-facing; it reads SSWGG. Residues 212–228 form a helical membrane-spanning segment; the sequence is YVFLINLIPLHVLVLML. Residues 229-233 lie on the Cytoplasmic side of the membrane; it reads TGRFS. A helical membrane pass occupies residues 234 to 259; it reads HRIYVAYCTVYCLGTILSMQISFVGF. Over 260-267 the chain is Lumenal; it reads QPVLSSEH. A helical membrane pass occupies residues 268-287; the sequence is MAAFGVFGLCQIHAFVDYLR. The Cytoplasmic segment spans residues 288-300; sequence SKLNPQQFEVLFR. Residues 301–321 traverse the membrane as a helical segment; it reads SVISLVGFVLLTVGALLMLTG. Residues 322-356 lie on the Lumenal side of the membrane; the sequence is KISPWTGRFYSLLDPSYAKNNIPIIASVSEHQPTT. An SVSE motif motif is present at residues 348–351; the sequence is SVSE. A helical membrane pass occupies residues 357–379; sequence WSSYYFDLQLLVFMFPVGLYYCF. Over 380 to 385 the chain is Cytoplasmic; it reads SNLSDA. The helical transmembrane segment at 386–402 threads the bilayer; that stretch reads RIFIIMYGVTSMYFSAV. Residues 403–406 lie on the Lumenal side of the membrane; sequence MVRL. Position 405 (Arg405) interacts with dolichyl diphosphooligosaccharide. The helical transmembrane segment at 407–428 threads the bilayer; it reads MLVLAPVMCILSGIGVSQVLST. Residues 429-453 lie on the Cytoplasmic side of the membrane; it reads YMKNLDISRPDKKSKKQQDSTYPIK. A helical transmembrane segment spans residues 454–473; sequence NEVASGMILVMAFFLITYTF. At 474–705 the chain is on the lumenal side; it reads HSTWVTSEAY…DLDNRGLSRT (232 aa). The interval 525–527 is interacts with target acceptor peptide in protein substrate; the sequence is WWD. The WWDYG motif motif lies at 525-529; it reads WWDYG. Tyr530 contacts dolichyl diphosphooligosaccharide. N-linked (GlcNAc...) asparagine glycans are attached at residues Asn537 and Asn544. Asn548 carries an N-linked (GlcNAc...) (high mannose) asparagine glycan. The short motif at 592–599 is the DK motif element; that stretch reads DINKFLWM.

It belongs to the STT3 family. As to quaternary structure, component of the oligosaccharyltransferase (OST) complex. There are 2 OST complexes, OST-A and OST-B, which contain STT3A or STT3B as catalytic subunit, respectively. OST-A and OST-B contain common core subunits RPN1, RPN2, OST48, OST4, DAD1 and TMEM258, and OST-A contains DC2/OSTC and KRTCAP2/KCP2 specific accessory subunits. OST-A complex assembly occurs through the formation of 3 subcomplexes. Subcomplex 1 contains RPN1 and TMEM258, subcomplex 2 contains the OST-A-specific subunits STT3A, DC2/OSTC, and KCP2 as well as the core subunit OST4, and subcomplex 3 contains RPN2, DAD1, and OST48. The OST-A complex can form stable complexes with the Sec61 complex or with both the Sec61 and TRAP complexes. It depends on Mg(2+) as a cofactor. Mn(2+) is required as a cofactor.

The protein localises to the endoplasmic reticulum. It localises to the endoplasmic reticulum membrane. It carries out the reaction a di-trans,poly-cis-dolichyl diphosphooligosaccharide + L-asparaginyl-[protein] = N(4)-(oligosaccharide-(1-&gt;4)-N-acetyl-beta-D-glucosaminyl-(1-&gt;4)-N-acetyl-beta-D-glucosaminyl)-L-asparaginyl-[protein] + a di-trans,poly-cis-dolichyl diphosphate + H(+). Its pathway is protein modification; protein glycosylation. Its function is as follows. Catalytic subunit of the oligosaccharyl transferase (OST) complex that catalyzes the initial transfer of a defined glycan (Glc(3)Man(9)GlcNAc(2) in eukaryotes) from the lipid carrier dolichol-pyrophosphate to an asparagine residue within an Asn-X-Ser/Thr consensus motif in nascent polypeptide chains, the first step in protein N-glycosylation. N-glycosylation occurs cotranslationally and the complex associates with the Sec61 complex at the channel-forming translocon complex that mediates protein translocation across the endoplasmic reticulum (ER). All subunits are required for a maximal enzyme activity. This subunit contains the active site and the acceptor peptide and donor lipid-linked oligosaccharide (LLO) binding pockets. STT3A is present in the majority of OST complexes and mediates cotranslational N-glycosylation of most sites on target proteins, while STT3B-containing complexes are required for efficient post-translational glycosylation and mediate glycosylation of sites that have been skipped by STT3A. STT3A-containing OST-A complex is also required to prevent hyperglycosylation of some target proteins by preventing glycosylation of facultative sites before folding of target proteins is completed. The polypeptide is Dolichyl-diphosphooligosaccharide--protein glycosyltransferase subunit STT3A (Mus musculus (Mouse)).